Reading from the N-terminus, the 341-residue chain is S-adenosylmethionine:tRNA ribosyltransferase-isomerase (341 aa).

Belongs to the QueA family. Monomer.

It localises to the cytoplasm. It catalyses the reaction 7-aminomethyl-7-carbaguanosine(34) in tRNA + S-adenosyl-L-methionine = epoxyqueuosine(34) in tRNA + adenine + L-methionine + 2 H(+). The protein operates within tRNA modification; tRNA-queuosine biosynthesis. Transfers and isomerizes the ribose moiety from AdoMet to the 7-aminomethyl group of 7-deazaguanine (preQ1-tRNA) to give epoxyqueuosine (oQ-tRNA). The chain is S-adenosylmethionine:tRNA ribosyltransferase-isomerase from Desulfitobacterium hafniense (strain DSM 10664 / DCB-2).